The primary structure comprises 258 residues: UPF0246 protein ACIAD2218 (258 aa).

The protein belongs to the UPF0246 family.

This chain is UPF0246 protein ACIAD2218, found in Acinetobacter baylyi (strain ATCC 33305 / BD413 / ADP1).